The sequence spans 179 residues: Large ribosomal subunit protein uL6 (179 aa).

This sequence belongs to the universal ribosomal protein uL6 family. Part of the 50S ribosomal subunit.

This protein binds to the 23S rRNA, and is important in its secondary structure. It is located near the subunit interface in the base of the L7/L12 stalk, and near the tRNA binding site of the peptidyltransferase center. This chain is Large ribosomal subunit protein uL6, found in Chloroherpeton thalassium (strain ATCC 35110 / GB-78).